Here is a 288-residue protein sequence, read N- to C-terminus: ATP synthase gamma chain (288 aa).

It belongs to the ATPase gamma chain family. In terms of assembly, F-type ATPases have 2 components, CF(1) - the catalytic core - and CF(0) - the membrane proton channel. CF(1) has five subunits: alpha(3), beta(3), gamma(1), delta(1), epsilon(1). CF(0) has three main subunits: a, b and c.

It localises to the cell membrane. Produces ATP from ADP in the presence of a proton gradient across the membrane. The gamma chain is believed to be important in regulating ATPase activity and the flow of protons through the CF(0) complex. The chain is ATP synthase gamma chain from Staphylococcus aureus (strain Mu3 / ATCC 700698).